The chain runs to 374 residues: Zinc finger CCCH domain-containing protein 15 homolog (374 aa).

C3H1-type zinc fingers lie at residues 89 to 116 (DPKS…HDLA) and 167 to 197 (YFLE…HCLP).

It belongs to the ZC3H15/TMA46 family.

This Caenorhabditis briggsae protein is Zinc finger CCCH domain-containing protein 15 homolog.